The sequence spans 547 residues: MDPMELRNVNIEPDDESSSGESAPDSYIGIGNSEKAAMSSQFANEDTESQKFLTNGFLGKKKLADYADEHHPGTTSFGMSSFNLSNAIMGSGILGLSYAMANTGIILFIIMLLAVAILSLYSVHLLLKTAKEGGSLIYEKLGEKAFGWPGKIGAFVSITMQNIGAMSSYLFIIKYELPEVIRAFMGLEENTGEWYLNGNYLIIFVSVGIILPLSLLKNLGYLGYTSGFSLTCMVFFVSVVIYKKFQIPCPLPVLDHSVGNLSFNNTLPMHVVMLPNNSESSDVNFMMDYTHRNPAGLDENQAKGSLHDSGVEYEAHSDDKCEPKYFVFNSRTAYAIPILVFAFVCHPEVLPIYSELKDRSRRKMQTVSNISITGMLVMYLLAALFGYLTFYGEVEDELLHAYSKVYTLDIPLLMVRLAVLVAVTLTVPIVLFPIRTSVITLLFPKRPFSWIRHFLIAAVLIALNNVLVILVPTIKYIFGFIGASSATMLIFILPAVFYLKLVKKETFRSPQKVGALIFLVVGIFFMIGSMALIIIDWIYDPPNSKHH.

Positions methionine 1–isoleucine 30 are disordered. Residues methionine 1–glycine 104 are Extracellular-facing. Position 49 is a phosphoserine (serine 49). Residues isoleucine 105–leucine 125 form a helical membrane-spanning segment. At leucine 126 to lysine 151 the chain is on the cytoplasmic side. Residues isoleucine 152–isoleucine 172 traverse the membrane as a helical segment. At isoleucine 173–tyrosine 195 the chain is on the extracellular side. A helical transmembrane segment spans residues leucine 196–leucine 216. Topologically, residues lysine 217–glycine 220 are cytoplasmic. The helical transmembrane segment at tyrosine 221–isoleucine 241 threads the bilayer. Residues tyrosine 242–threonine 332 lie on the Extracellular side of the membrane. Cysteine 249 and cysteine 321 are disulfide-bonded. N-linked (GlcNAc...) asparagine glycans are attached at residues asparagine 260, asparagine 264, and asparagine 276. Residues alanine 333–tyrosine 353 traverse the membrane as a helical segment. At serine 354 to asparagine 369 the chain is on the cytoplasmic side. Residues isoleucine 370–phenylalanine 390 form a helical membrane-spanning segment. Residues tyrosine 391–proline 411 lie on the Extracellular side of the membrane. The chain crosses the membrane as a helical span at residues leucine 412–phenylalanine 432. The Cytoplasmic segment spans residues proline 433–histidine 453. Residues phenylalanine 454 to isoleucine 474 traverse the membrane as a helical segment. Residues lysine 475–tyrosine 476 lie on the Extracellular side of the membrane. Residues isoleucine 477–phenylalanine 497 form a helical membrane-spanning segment. Over tyrosine 498–glycine 514 the chain is Cytoplasmic. A helical transmembrane segment spans residues alanine 515–isoleucine 535. Residues aspartate 536–histidine 547 lie on the Extracellular side of the membrane.

Belongs to the amino acid/polyamine transporter 2 family. The disulfide bond plays an important role in substrate transport, but has no effect on trafficking to the cell surface. As to expression, expressed almost exclusively in embryonic and adult liver, and at lower levels in the kidney. Expressed at lower levels in adult muscle and pancreas. Detected in fetal blood vessels. Expressed in syncytiotrophoblas of placenta during first trimester and at term. Highly expressed in first trimester placenta compared to term placenta.

Its subcellular location is the cell membrane. It localises to the cell projection. It is found in the microvillus membrane. It carries out the reaction L-methionine(in) + Na(+)(in) = L-methionine(out) + Na(+)(out). The enzyme catalyses L-asparagine(in) + Na(+)(in) = L-asparagine(out) + Na(+)(out). The catalysed reaction is L-threonine(in) + Na(+)(in) = L-threonine(out) + Na(+)(out). It catalyses the reaction L-serine(in) + Na(+)(in) = L-serine(out) + Na(+)(out). It carries out the reaction glycine(in) + Na(+)(in) = glycine(out) + Na(+)(out). The enzyme catalyses L-alanine(in) + Na(+)(in) = L-alanine(out) + Na(+)(out). The catalysed reaction is L-glutamine(in) + Na(+)(in) = L-glutamine(out) + Na(+)(out). It catalyses the reaction L-histidine(in) + Na(+)(in) = L-histidine(out) + Na(+)(out). It carries out the reaction L-cysteine(in) + Na(+)(in) = L-cysteine(out) + Na(+)(out). The enzyme catalyses L-proline(in) + Na(+)(in) = L-proline(out) + Na(+)(out). In terms of biological role, symporter that cotransports neutral amino acids and sodium ions from the extraccellular to the intracellular side of the cell membrane. The transport is electrogenic, pH dependent and partially tolerates substitution of Na(+) by Li(+). Preferentially transports smaller amino acids, such as glycine, L-alanine, L-serine, L-asparagine and L-threonine, followed by L-cysteine, L-histidine, L-proline and L-glutamine and L-methionine. The sequence is that of Sodium-coupled neutral amino acid transporter 4 from Homo sapiens (Human).